The sequence spans 237 residues: Large ribosomal subunit protein uL22m (237 aa).

The protein belongs to the universal ribosomal protein uL22 family.

It localises to the mitochondrion. The protein is Large ribosomal subunit protein uL22m (mrpl22) of Dictyostelium discoideum (Social amoeba).